We begin with the raw amino-acid sequence, 638 residues long: Autolysin (638 aa).

The first 28 residues, 1 to 28, serve as a signal peptide directing secretion; the sequence is MSLATRRFGAAAALLVAACVLCTAPAWA. Positions 29-183 are cleaved as a propeptide — activation peptide; that stretch reads QNETTGTGMV…LKSILKGSQK (155 aa). An N-linked (GlcNAc...) asparagine glycan is attached at Asn30. The Cysteine switch motif lies at 95–102; the sequence is PRCNVPRA. Cys97 is a Zn(2+) binding site. A glycan (N-linked (GlcNAc...) asparagine) is linked at Asn126. The disordered stretch occupies residues 269–292; the sequence is VTPPPRPPRPPRPPPRAGSTISSL. The segment covering 270–284 has biased composition (pro residues); sequence TPPPRPPRPPRPPPR. The N-linked (GlcNAc...) asparagine glycan is linked to Asn296. His396 contributes to the Zn(2+) binding site. Glu397 is an active-site residue. Zn(2+) is bound by residues His400 and His406. 4 N-linked (GlcNAc...) asparagine glycosylation sites follow: Asn458, Asn465, Asn470, and Asn523.

It belongs to the peptidase M11 family. Zn(2+) is required as a cofactor. In terms of processing, present in 2 forms: an inactive V-form in vegetative cells and an active and soluble G-form. The V-form enzyme may be converted to the G-form enzyme during gametic differentiation under nitrogen-starved conditions.

It localises to the periplasm. It is found in the secreted. The protein resides in the cell wall. It carries out the reaction Cleavage of the proline- and hydroxyproline-rich proteins of the Chlamydomonas cell wall. Also cleaves azocasein, gelatin and Leu-Trp-Met-|-Arg-Phe-Ala.. Functionally, mediates digestion of the cell walls of the 2 mating type gametes during mating as a necessary prelude to cell fusion. This enzyme acts specifically on the framework proteins (inner wall) of the cell wall, cleaving several model peptides at specific sites. The protein is Autolysin of Chlamydomonas reinhardtii (Chlamydomonas smithii).